Here is a 388-residue protein sequence, read N- to C-terminus: MTSSRDALSIAQALLRCPSVTPADAGALGVLETLLKDAGFTAHRVTFSEPGAADIDNLYARIGDGAPHLCFAGHTDVVPPGDADAWSHGAFSGDVEGGLLYGRGAVDMKGGIACAVAAVLDHLAAHGGRPKGSISFLITGDEEDVAVNGTVKLLQWAADRGETFDHCIVGEPSNVEAIGDTIKIGRRGSQSGMLIVDGLQGHVAYPHRASNPIPDIAALITALNDEPLDQGSAQFQPSNLEFTSVDVGNPATNVIPAQARAKFNIRFNDHHTQDSLKALIEQRLAAACGNRIRARIEWLPSNADVFVTKPGNFTDLVTASIADVTGRTPDLNTGGGTSDARFIAKYCPVVEFGLVGQTMHQIDERTPVADLDQLTAIYRGVLERYFKS.

A Zn(2+)-binding site is contributed by His74. Asp76 is an active-site residue. Asp107 is a Zn(2+) binding site. The active-site Proton acceptor is the Glu142. 3 residues coordinate Zn(2+): Glu143, Glu171, and His360.

The protein belongs to the peptidase M20A family. DapE subfamily. As to quaternary structure, homodimer. The cofactor is Zn(2+). It depends on Co(2+) as a cofactor.

It carries out the reaction N-succinyl-(2S,6S)-2,6-diaminopimelate + H2O = (2S,6S)-2,6-diaminopimelate + succinate. It functions in the pathway amino-acid biosynthesis; L-lysine biosynthesis via DAP pathway; LL-2,6-diaminopimelate from (S)-tetrahydrodipicolinate (succinylase route): step 3/3. Its function is as follows. Catalyzes the hydrolysis of N-succinyl-L,L-diaminopimelic acid (SDAP), forming succinate and LL-2,6-diaminopimelate (DAP), an intermediate involved in the bacterial biosynthesis of lysine and meso-diaminopimelic acid, an essential component of bacterial cell walls. The polypeptide is Succinyl-diaminopimelate desuccinylase (Rhodopseudomonas palustris (strain BisB5)).